Reading from the N-terminus, the 64-residue chain is Large ribosomal subunit protein uL29 (64 aa).

This sequence belongs to the universal ribosomal protein uL29 family.

This chain is Large ribosomal subunit protein uL29, found in Synechococcus elongatus (strain ATCC 33912 / PCC 7942 / FACHB-805) (Anacystis nidulans R2).